The sequence spans 138 residues: Basic phospholipase A2 BP-II (138 aa).

The N-terminal stretch at Met-1 to Gly-16 is a signal peptide. Disulfide bonds link Cys-42-Cys-132, Cys-44-Cys-60, Cys-59-Cys-112, Cys-65-Cys-138, Cys-66-Cys-105, Cys-73-Cys-98, and Cys-91-Cys-103. Ca(2+) is bound by residues Gly-45 and Gly-47. His-63 is a catalytic residue. Asp-106 is an active-site residue.

This sequence belongs to the phospholipase A2 family. Group II subfamily. K49 sub-subfamily. As to quaternary structure, exists as a monomer in both solution and crystal states. In the presence of SDS or probably in the presence of phospholipids, assembles to form SDS-resistant stable oligomers. Ca(2+) is required as a cofactor. As to expression, expressed by the venom gland.

The protein localises to the secreted. It carries out the reaction a 1,2-diacyl-sn-glycero-3-phosphocholine + H2O = a 1-acyl-sn-glycero-3-phosphocholine + a fatty acid + H(+). Its function is as follows. Snake venom phospholipase A2 (PLA2) that shows anticoagulant activities, strong myolytic activity, infiltration of polymorphonuclear cells, and edema in stromal tissues. Induces cell death of Jurkat cells in a concentration-dependent manner. Shows a low phospholipase A2 activity. PLA2 catalyzes the calcium-dependent hydrolysis of the 2-acyl groups in 3-sn-phosphoglycerides. In Protobothrops flavoviridis (Habu), this protein is Basic phospholipase A2 BP-II.